We begin with the raw amino-acid sequence, 320 residues long: Fructose-1,6-bisphosphatase class 1 (320 aa).

Mg(2+) is bound by residues Glu-93, Asp-114, Leu-116, and Asp-117. Residues Asp-117–Ser-120, Tyr-225, and Lys-256 contribute to the substrate site. Position 262 (Glu-262) interacts with Mg(2+).

It belongs to the FBPase class 1 family. In terms of assembly, homotetramer. The cofactor is Mg(2+).

It localises to the cytoplasm. The catalysed reaction is beta-D-fructose 1,6-bisphosphate + H2O = beta-D-fructose 6-phosphate + phosphate. It functions in the pathway carbohydrate biosynthesis; gluconeogenesis. The sequence is that of Fructose-1,6-bisphosphatase class 1 from Syntrophotalea carbinolica (strain DSM 2380 / NBRC 103641 / GraBd1) (Pelobacter carbinolicus).